The primary structure comprises 507 residues: Cytochrome P450 4X1 (507 aa).

Residues 14-34 form a helical membrane-spanning segment; the sequence is LHLALVFCLALVLMQAVKLYL. C452 lines the heme pocket.

It belongs to the cytochrome P450 family. The cofactor is heme. Expressed at high levels in brain, mainly in neurons in different regions, including brain stem, hippocampus, cortex and cerebellum. Also expressed in cerebral vasculature. Not detected in kidney, nor liver.

The protein resides in the endoplasmic reticulum membrane. Its subcellular location is the microsome membrane. The catalysed reaction is N-(5Z,8Z,11Z,14Z-eicosatetraenoyl)-ethanolamine + reduced [NADPH--hemoprotein reductase] + O2 = N-(14,15-epoxy-5Z,8Z,11Z-eicosatrienoyl)-ethanolamine + oxidized [NADPH--hemoprotein reductase] + H2O + H(+). Its function is as follows. A cytochrome P450 monooxygenase that selectively catalyzes the epoxidation of the last double bond of the arachidonoyl moiety of anandamide, potentially modulating endocannabinoid signaling. Has no hydroxylase activity toward various fatty acids, steroids and prostaglandins. Mechanistically, uses molecular oxygen inserting one oxygen atom into a substrate, and reducing the second into a water molecule, with two electrons provided by NADPH via cytochrome P450 reductase (CPR; NADPH-ferrihemoprotein reductase). In Rattus norvegicus (Rat), this protein is Cytochrome P450 4X1.